Reading from the N-terminus, the 175-residue chain is Translation initiation factor IF-3 (175 aa).

Belongs to the IF-3 family. Monomer.

It localises to the cytoplasm. In terms of biological role, IF-3 binds to the 30S ribosomal subunit and shifts the equilibrium between 70S ribosomes and their 50S and 30S subunits in favor of the free subunits, thus enhancing the availability of 30S subunits on which protein synthesis initiation begins. The polypeptide is Translation initiation factor IF-3 (Chlamydia trachomatis serovar D (strain ATCC VR-885 / DSM 19411 / UW-3/Cx)).